The following is a 615-amino-acid chain: Dihydroxy-acid dehydratase (615 aa).

Aspartate 83 is a binding site for Mg(2+). A [2Fe-2S] cluster-binding site is contributed by cysteine 124. Residues aspartate 125 and lysine 126 each coordinate Mg(2+). Position 126 is an N6-carboxylysine (lysine 126). [2Fe-2S] cluster is bound at residue cysteine 199. Glutamate 495 contacts Mg(2+). Catalysis depends on serine 521, which acts as the Proton acceptor.

The protein belongs to the IlvD/Edd family. As to quaternary structure, homodimer. The cofactor is [2Fe-2S] cluster. Mg(2+) is required as a cofactor.

The catalysed reaction is (2R)-2,3-dihydroxy-3-methylbutanoate = 3-methyl-2-oxobutanoate + H2O. The enzyme catalyses (2R,3R)-2,3-dihydroxy-3-methylpentanoate = (S)-3-methyl-2-oxopentanoate + H2O. Its pathway is amino-acid biosynthesis; L-isoleucine biosynthesis; L-isoleucine from 2-oxobutanoate: step 3/4. It functions in the pathway amino-acid biosynthesis; L-valine biosynthesis; L-valine from pyruvate: step 3/4. Its function is as follows. Functions in the biosynthesis of branched-chain amino acids. Catalyzes the dehydration of (2R,3R)-2,3-dihydroxy-3-methylpentanoate (2,3-dihydroxy-3-methylvalerate) into 2-oxo-3-methylpentanoate (2-oxo-3-methylvalerate) and of (2R)-2,3-dihydroxy-3-methylbutanoate (2,3-dihydroxyisovalerate) into 2-oxo-3-methylbutanoate (2-oxoisovalerate), the penultimate precursor to L-isoleucine and L-valine, respectively. This Corynebacterium jeikeium (strain K411) protein is Dihydroxy-acid dehydratase.